Here is a 306-residue protein sequence, read N- to C-terminus: Bifunctional protein FolD (306 aa).

NADP(+) contacts are provided by residues 169-171, serine 194, and isoleucine 235; that span reads GRS.

The protein belongs to the tetrahydrofolate dehydrogenase/cyclohydrolase family. Homodimer.

The catalysed reaction is (6R)-5,10-methylene-5,6,7,8-tetrahydrofolate + NADP(+) = (6R)-5,10-methenyltetrahydrofolate + NADPH. It carries out the reaction (6R)-5,10-methenyltetrahydrofolate + H2O = (6R)-10-formyltetrahydrofolate + H(+). The protein operates within one-carbon metabolism; tetrahydrofolate interconversion. Functionally, catalyzes the oxidation of 5,10-methylenetetrahydrofolate to 5,10-methenyltetrahydrofolate and then the hydrolysis of 5,10-methenyltetrahydrofolate to 10-formyltetrahydrofolate. In Thermosynechococcus vestitus (strain NIES-2133 / IAM M-273 / BP-1), this protein is Bifunctional protein FolD.